Reading from the N-terminus, the 400-residue chain is Formate-dependent phosphoribosylglycinamide formyltransferase (400 aa).

N(1)-(5-phospho-beta-D-ribosyl)glycinamide is bound by residues 22–23 (EL) and Glu82. ATP is bound by residues Arg115, Lys157, 162-167 (SSGKGQ), 197-200 (EGFV), and Glu205. Positions 120 to 315 (RLAAETLGLP…EFELHARAIL (196 aa)) constitute an ATP-grasp domain. Mg(2+)-binding residues include Glu274 and Glu286. N(1)-(5-phospho-beta-D-ribosyl)glycinamide-binding positions include Asp293, Lys362, and 369-370 (RR).

This sequence belongs to the PurK/PurT family. Homodimer.

The catalysed reaction is N(1)-(5-phospho-beta-D-ribosyl)glycinamide + formate + ATP = N(2)-formyl-N(1)-(5-phospho-beta-D-ribosyl)glycinamide + ADP + phosphate + H(+). It participates in purine metabolism; IMP biosynthesis via de novo pathway; N(2)-formyl-N(1)-(5-phospho-D-ribosyl)glycinamide from N(1)-(5-phospho-D-ribosyl)glycinamide (formate route): step 1/1. Involved in the de novo purine biosynthesis. Catalyzes the transfer of formate to 5-phospho-ribosyl-glycinamide (GAR), producing 5-phospho-ribosyl-N-formylglycinamide (FGAR). Formate is provided by PurU via hydrolysis of 10-formyl-tetrahydrofolate. The polypeptide is Formate-dependent phosphoribosylglycinamide formyltransferase (Mycolicibacterium gilvum (strain PYR-GCK) (Mycobacterium gilvum (strain PYR-GCK))).